The sequence spans 210 residues: Transcriptional regulator GfcR (210 aa).

The segment at 39–60 (VERSGAATEPEPRAEPEGPDDI) is disordered. Over residues 48-60 (PEPRAEPEGPDDI) the composition is skewed to basic and acidic residues.

The protein belongs to the purine/pyrimidine phosphoribosyltransferase family. GfcR subfamily.

With respect to regulation, interaction with effectors modulates GfcR activity. 2-keto-3-deoxy-6-phosphogluconate (KDPG), fructose-1,6-bisphosphate (FBP), 2-keto-3-deoxy-6-phosphogalactonate (KDPGal) and glycerol-3-phosphate (G3P), which are intermediates of sugar and glycerol degradation pathways, can act as inducer molecules. DNA-binding transcriptional regulator that functions as a regulator of central sugar catabolic pathways. Is both a local regulator of specific steps in the pathways for D-glucose and D-fructose degradation and a global regulator of hexose catabolism. In the presence of D-glucose, activates expression of the gene encoding the gluconate dehydratase (gad), which is involved in D-glucose catabolism via the semiphosphorylative Entner-Doudoroff (spED) pathway. In the presence of D-fructose, activates expression of the genes encoding the PTS system EIIC component (ptfC) and the fructose-1,6-bisphosphate aldolase (fba), which are involved in D-fructose uptake and degradation via the modified Embden-Meyerhof pathway. In addition, in the presence of D-glucose, D-fructose, D-galactose or glycerol, it activates expression of the genes encoding glyceraldehyde-3-phosphate dehydrogenase (gap) and pyruvate kinase (pykA), enzymes common to all four degradation pathways. Acts by binding directly to the promoter region of the regulated genes. The chain is Transcriptional regulator GfcR from Haloferax volcanii (strain ATCC 29605 / DSM 3757 / JCM 8879 / NBRC 14742 / NCIMB 2012 / VKM B-1768 / DS2) (Halobacterium volcanii).